The chain runs to 447 residues: Probable glycine dehydrogenase (decarboxylating) subunit 1 (447 aa).

Belongs to the GcvP family. N-terminal subunit subfamily. In terms of assembly, the glycine cleavage system is composed of four proteins: P, T, L and H. In this organism, the P 'protein' is a heterodimer of two subunits.

The enzyme catalyses N(6)-[(R)-lipoyl]-L-lysyl-[glycine-cleavage complex H protein] + glycine + H(+) = N(6)-[(R)-S(8)-aminomethyldihydrolipoyl]-L-lysyl-[glycine-cleavage complex H protein] + CO2. Its function is as follows. The glycine cleavage system catalyzes the degradation of glycine. The P protein binds the alpha-amino group of glycine through its pyridoxal phosphate cofactor; CO(2) is released and the remaining methylamine moiety is then transferred to the lipoamide cofactor of the H protein. This is Probable glycine dehydrogenase (decarboxylating) subunit 1 from Macrococcus caseolyticus (strain JCSC5402) (Macrococcoides caseolyticum).